We begin with the raw amino-acid sequence, 423 residues long: Exodeoxyribonuclease 7 large subunit (423 aa).

Belongs to the XseA family. As to quaternary structure, heterooligomer composed of large and small subunits.

The protein localises to the cytoplasm. The catalysed reaction is Exonucleolytic cleavage in either 5'- to 3'- or 3'- to 5'-direction to yield nucleoside 5'-phosphates.. In terms of biological role, bidirectionally degrades single-stranded DNA into large acid-insoluble oligonucleotides, which are then degraded further into small acid-soluble oligonucleotides. The chain is Exodeoxyribonuclease 7 large subunit from Natranaerobius thermophilus (strain ATCC BAA-1301 / DSM 18059 / JW/NM-WN-LF).